The primary structure comprises 191 residues: Peptidyl-tRNA hydrolase (191 aa).

TRNA is bound at residue Y16. H21 (proton acceptor) is an active-site residue. Positions 67, 69, and 115 each coordinate tRNA.

It belongs to the PTH family. Monomer.

The protein localises to the cytoplasm. It carries out the reaction an N-acyl-L-alpha-aminoacyl-tRNA + H2O = an N-acyl-L-amino acid + a tRNA + H(+). In terms of biological role, hydrolyzes ribosome-free peptidyl-tRNAs (with 1 or more amino acids incorporated), which drop off the ribosome during protein synthesis, or as a result of ribosome stalling. Functionally, catalyzes the release of premature peptidyl moieties from peptidyl-tRNA molecules trapped in stalled 50S ribosomal subunits, and thus maintains levels of free tRNAs and 50S ribosomes. This Ruthia magnifica subsp. Calyptogena magnifica protein is Peptidyl-tRNA hydrolase.